We begin with the raw amino-acid sequence, 97 residues long: Putative septation protein SpoVG (97 aa).

It belongs to the SpoVG family.

Its function is as follows. Could be involved in septation. This chain is Putative septation protein SpoVG, found in Borreliella afzelii (strain PKo) (Borrelia afzelii).